Consider the following 577-residue polypeptide: Eukaryotic translation initiation factor 3 subunit D (577 aa).

The tract at residues 103–177 (DSTKTRFGRG…KDYDKPQRNR (75 aa)) is disordered. Residues 166–177 (GWKDYDKPQRNR) show a composition bias toward basic and acidic residues. Residues 305–319 (TLDMVTVNENAADAP) form an RNA gate region. Residues 558 to 577 (GSFEDDGEGDVIEENVEEED) are disordered. A compositionally biased stretch (acidic residues) spans 560–577 (FEDDGEGDVIEENVEEED).

The protein belongs to the eIF-3 subunit D family. As to quaternary structure, component of the eukaryotic translation initiation factor 3 (eIF-3) complex.

The protein localises to the cytoplasm. In terms of biological role, mRNA cap-binding component of the eukaryotic translation initiation factor 3 (eIF-3) complex, which is involved in protein synthesis of a specialized repertoire of mRNAs and, together with other initiation factors, stimulates binding of mRNA and methionyl-tRNAi to the 40S ribosome. The eIF-3 complex specifically targets and initiates translation of a subset of mRNAs involved in cell proliferation. In the eIF-3 complex, eif3d specifically recognizes and binds the 7-methylguanosine cap of a subset of mRNAs. This Sclerotinia sclerotiorum (strain ATCC 18683 / 1980 / Ss-1) (White mold) protein is Eukaryotic translation initiation factor 3 subunit D.